The chain runs to 88 residues: Small ribosomal subunit protein uS15 (88 aa).

Belongs to the universal ribosomal protein uS15 family. As to quaternary structure, part of the 30S ribosomal subunit. Forms a bridge to the 50S subunit in the 70S ribosome, contacting the 23S rRNA.

In terms of biological role, one of the primary rRNA binding proteins, it binds directly to 16S rRNA where it helps nucleate assembly of the platform of the 30S subunit by binding and bridging several RNA helices of the 16S rRNA. Its function is as follows. Forms an intersubunit bridge (bridge B4) with the 23S rRNA of the 50S subunit in the ribosome. The protein is Small ribosomal subunit protein uS15 of Geobacter metallireducens (strain ATCC 53774 / DSM 7210 / GS-15).